A 188-amino-acid polypeptide reads, in one-letter code: Peptidyl-tRNA hydrolase (188 aa).

Tyr18 serves as a coordination point for tRNA. His23 acts as the Proton acceptor in catalysis. TRNA is bound by residues Tyr67, Asn69, and Asn115.

It belongs to the PTH family. As to quaternary structure, monomer.

The protein resides in the cytoplasm. It carries out the reaction an N-acyl-L-alpha-aminoacyl-tRNA + H2O = an N-acyl-L-amino acid + a tRNA + H(+). In terms of biological role, hydrolyzes ribosome-free peptidyl-tRNAs (with 1 or more amino acids incorporated), which drop off the ribosome during protein synthesis, or as a result of ribosome stalling. Catalyzes the release of premature peptidyl moieties from peptidyl-tRNA molecules trapped in stalled 50S ribosomal subunits, and thus maintains levels of free tRNAs and 50S ribosomes. In Salinibacter ruber (strain DSM 13855 / M31), this protein is Peptidyl-tRNA hydrolase.